The sequence spans 409 residues: Argininosuccinate synthase (409 aa).

ATP contacts are provided by residues Ala-15–Ser-23 and Ala-42. Tyr-93 and Ser-98 together coordinate L-citrulline. Gly-123 contributes to the ATP binding site. The L-aspartate site is built by Thr-125, Asn-129, and Asp-130. Asn-129 contacts L-citrulline. The L-citrulline site is built by Arg-133, Ser-182, Ser-191, Glu-267, and Tyr-279.

It belongs to the argininosuccinate synthase family. Type 1 subfamily. In terms of assembly, homotetramer.

It is found in the cytoplasm. It carries out the reaction L-citrulline + L-aspartate + ATP = 2-(N(omega)-L-arginino)succinate + AMP + diphosphate + H(+). The protein operates within amino-acid biosynthesis; L-arginine biosynthesis; L-arginine from L-ornithine and carbamoyl phosphate: step 2/3. This is Argininosuccinate synthase from Desulfitobacterium hafniense (strain Y51).